The primary structure comprises 448 residues: NK1 transcription factor-related protein 1 (448 aa).

Low complexity predominate over residues 1–13 (MSASGPEAPGDIP). 3 disordered regions span residues 1 to 80 (MSAS…LRPT), 115 to 299 (ASAP…PRRA), and 350 to 397 (KWKK…GAPL). Over residues 14–30 (ALPPPPQPGSGPAPPAP) the composition is skewed to pro residues. Composition is skewed to low complexity over residues 62–79 (PAAP…PLRP) and 115–129 (ASAP…SGRP). Residues 130 to 139 (PRAEELERRA) show a composition bias toward basic and acidic residues. Positions 186 to 203 (SGDEVPDDEDDDEDEAPE) are enriched in acidic residues. Over residues 205-214 (EAARGAEEAR) the composition is skewed to basic and acidic residues. 2 stretches are compositionally biased toward gly residues: residues 215-227 (GGGG…GSGC) and 259-270 (PPGGAAAPGGAG). The segment covering 271-280 (TTPQGTATAA) has biased composition (low complexity). The segment at residues 296–355 (PRRARTAFTYEQLVALENKFKATRYLSVCERLNLALSLSLTETQVKIWFQNRRTKWKKQN) is a DNA-binding region (homeobox). The span at 364–382 (TGGGGGPGPGAGPGTGLPG) shows a compositional bias: gly residues.

This sequence belongs to the NK-1 homeobox family. In terms of tissue distribution, expressed in hemopoietic progenitor cells.

The protein resides in the nucleus. May be required for the coordinated crosstalk of factors involved in the maintenance of energy homeostasis, possibly by regulating the transcription of specific factors involved in energy balance. The polypeptide is NK1 transcription factor-related protein 1 (Homo sapiens (Human)).